Here is a 498-residue protein sequence, read N- to C-terminus: Cytoskeletal signaling protein slm1 (498 aa).

The disordered stretch occupies residues 1-23; it reads MELSGKSEFPTRTEIPNQASNGD. Ser175 and Ser312 each carry phosphoserine. Residues 300 to 405 enclose the PH domain; sequence VPIMAGYLIR…WWEALNTHIA (106 aa). Residues 416–475 are disordered; it reads ANGPSAVSDSDDDDDDPNDFRPAVERQSSTMNTRMSQPSSAVNTNRSYGSEQIPSYADSQ. The span at 441–475 shows a compositional bias: polar residues; sequence RQSSTMNTRMSQPSSAVNTNRSYGSEQIPSYADSQ.

It is found in the cell tip. In terms of biological role, effector of the TORC2- and calcineurin-signaling pathways. Mediates actin polarization via inhibition of calcineurin-dependent transcription. May play a role in the response to the disruption of sphingolipid synthesis, where dephosphorylation of slm1 leads to the activation and phosphorylation of ypk1 through the TORC2 and PKH1 pathways, which in turn phosphorylates orm1 and lag1 to activate sphingolipid synthesis. This Schizosaccharomyces pombe (strain 972 / ATCC 24843) (Fission yeast) protein is Cytoskeletal signaling protein slm1 (slm1).